The primary structure comprises 118 residues: Large ribosomal subunit protein bL20 (118 aa).

It belongs to the bacterial ribosomal protein bL20 family.

Its function is as follows. Binds directly to 23S ribosomal RNA and is necessary for the in vitro assembly process of the 50S ribosomal subunit. It is not involved in the protein synthesizing functions of that subunit. This Pelagibacter ubique (strain HTCC1062) protein is Large ribosomal subunit protein bL20.